The chain runs to 441 residues: UDP-N-acetylmuramoylalanine--D-glutamate ligase (441 aa).

Position 113 to 119 (113 to 119 (GSNAKST)) interacts with ATP.

The protein belongs to the MurCDEF family.

Its subcellular location is the cytoplasm. It carries out the reaction UDP-N-acetyl-alpha-D-muramoyl-L-alanine + D-glutamate + ATP = UDP-N-acetyl-alpha-D-muramoyl-L-alanyl-D-glutamate + ADP + phosphate + H(+). Its pathway is cell wall biogenesis; peptidoglycan biosynthesis. Its function is as follows. Cell wall formation. Catalyzes the addition of glutamate to the nucleotide precursor UDP-N-acetylmuramoyl-L-alanine (UMA). This is UDP-N-acetylmuramoylalanine--D-glutamate ligase from Alcanivorax borkumensis (strain ATCC 700651 / DSM 11573 / NCIMB 13689 / SK2).